A 1767-amino-acid polypeptide reads, in one-letter code: Trans-Golgi network-localized SYP41-interacting protein 1 (1767 aa).

Positions 1 to 72 (MHEKDDLPQD…LTTDDDDNDD (72 aa)) are disordered. The Cytoplasmic portion of the chain corresponds to 1 to 1748 (MHEKDDLPQD…RVLMSRPQAR (1748 aa)). Positions 16–32 (IENDDESNGQEEEELDP) are enriched in acidic residues. 5 coiled-coil regions span residues 276 to 436 (LSHL…MSTA), 493 to 516 (VRSL…LKDL), 570 to 590 (KSNI…MEET), 684 to 805 (VSNL…LQQS), and 845 to 1082 (IQEV…LSSK). Over residues 1177–1190 (DNSVNTEPENSQGS) the composition is skewed to polar residues. The disordered stretch occupies residues 1177–1198 (DNSVNTEPENSQGSAADEDEIS). 4 coiled-coil regions span residues 1251–1310 (NSSL…FQEN), 1362–1424 (IRDM…WHEK), 1522–1542 (LKKA…AKNE), and 1603–1630 (LAGS…KAIQ). The helical; Anchor for type IV membrane protein transmembrane segment at 1749-1766 (LGVMVYSLLLHLWLLASI) threads the bilayer. L1767 is a topological domain (vesicular).

Interacts with SYP41. Expressed ubiquitously in roots, leaves and flowers, and, to a lower extent, in stems.

It localises to the golgi apparatus. It is found in the trans-Golgi network membrane. Its function is as follows. Tethering factor involved in vesicle fusion at the trans-Golgi network (TGN) thus being required for efficient protein trafficking to the vacuole. Implicated in resistance to salt and osmotic stresses. Modulates the cell morphology (e.g. epidermal cell file rotation (CFR) and cell expansion) in mature regions of roots and the base of hypocotyls as well as root skewing, a process leading to root movement within the soil in order to maximize anchorage and nutrient acquisition, probably by regulating microtubule stabilization independently of their orientation. This Arabidopsis thaliana (Mouse-ear cress) protein is Trans-Golgi network-localized SYP41-interacting protein 1.